The chain runs to 172 residues: Translationally-controlled tumor protein homolog (172 aa).

One can recognise a TCTP domain in the interval 1–172 (MIIYRDCISQ…FKDGLEIEKC (172 aa)). S46 carries the post-translational modification Phosphoserine; by PLK1.

The protein belongs to the TCTP family.

It localises to the cytoplasm. Functionally, involved in calcium binding and microtubule stabilization. This is Translationally-controlled tumor protein homolog (TPT1) from Gallus gallus (Chicken).